Consider the following 260-residue polypeptide: Cystine transporter (260 aa).

Residues 1–67 (MVSLDDILGI…QLYCWKMTGD (67 aa)) enclose the PQ-loop 1 domain. Transmembrane regions (helical) follow at residues 7–28 (ILGI…ITNW), 40–62 (FVML…LYCW), 81–102 (FWYC…VAGA), 118–138 (WYLR…VQFM), and 151–175 (TLAY…PQVT). In terms of domain architecture, PQ-loop 2 spans 162 to 212 (KISMSLIKYIPQVTHNSTRKSMDCFPIQGVFLDVTGGIASLLQLIWQLSND). Residue N177 is glycosylated (N-linked (GlcNAc...) asparagine). The next 2 helical transmembrane spans lie at 185–205 (CFPI…LLQL) and 227–247 (VGLS…WFVY).

It belongs to the cystinosin family.

The protein resides in the endosome membrane. The protein localises to the vacuole membrane. It catalyses the reaction L-cystine(out) + H(+)(out) = L-cystine(in) + H(+)(in). Its function is as follows. Cystine/H(+) symporter that mediates export of cystine, the oxidized dimer of cysteine, from vacuoles/endodomes. The sequence is that of Cystine transporter (ERS1) from Saccharomyces cerevisiae (strain ATCC 204508 / S288c) (Baker's yeast).